The primary structure comprises 722 residues: Zinc finger BED domain-containing protein RICESLEEPER 1 (722 aa).

The BED-type zinc finger occupies 66-126 (RKKSLVWEHF…GSCPKIKNQE (61 aa)). Zn(2+) is bound by residues C89, C92, H113, and C119. Positions 572–592 (VEQGGGNNAPASENSTQATAP) are disordered. Positions 580-592 (APASENSTQATAP) are enriched in polar residues. The tract at residues 617 to 702 (ELEQYLDESL…EALVCAKDWL (86 aa)) is HATC (Hobo-Ac-Tam3) domain.

Homodimer.

Its subcellular location is the nucleus. Transposase-like protein that is essential for plant growth and development. May regulate global gene expression by recruiting other cellular factors. The sequence is that of Zinc finger BED domain-containing protein RICESLEEPER 1 from Oryza sativa subsp. japonica (Rice).